The following is a 1581-amino-acid chain: Maestro heat-like repeat-containing protein family member 2B (1581 aa).

16 HEAT repeats span residues 123–160, 305–342, 401–441, 464–501, 526–543, 544–580, 658–695, 773–815, 960–997, 1017–1055, 1112–1150, 1153–1191, 1254–1291, 1295–1332, 1359–1379, and 1380–1416; these read FMMM…SIYK, ANPV…AEEP, MSNR…LVIG, DYLF…KLPS, AIGL…KLAE, MWKT…SLWK, ENHL…LTKT, TYKE…LKPA, CQEV…KFIP, PLCT…HMPV, KLMR…TGAH, HLYP…LGER, GVIL…EPIL, GNLR…GAPH, CESL…DINF, and YFKE…LTGR.

In terms of assembly, found in a complex at least composed of MROH2B isoform 2, PRKACA isoform 2 and TCP11. Interacts with PRKACA isoform 2. Interacts with TCP11. In terms of processing, constitutively phosphorylated on serine and threonine residues in acrosomal region of the sperm head, midpiece and flagellar regions of noncapacitated spermatozoa. Phosphorylation on tyrosine residues increases upon sperm capacitation within the acrosomal and tail regions in a protein kinase A (PKA)-dependent signaling pathway. As to expression, expressed strongly in round spermatids and fully mature spermatozoa. Expressed weakly in pachytene spermatocytes (at protein level). Isoform 2 is specifically expressed in the testis. Isoform 2 is expressed in pachytene spermatocytes and round spermatids. Isoform 3 is weakly expressed in testis.

Its subcellular location is the cytoplasm. The protein resides in the cytoplasmic vesicle. It is found in the secretory vesicle. It localises to the acrosome. The protein localises to the cell projection. Its subcellular location is the cilium. The protein resides in the flagellum. May play a role in the process of sperm capacitation. The polypeptide is Maestro heat-like repeat-containing protein family member 2B (Mus musculus (Mouse)).